The following is a 252-amino-acid chain: Major prion protein (252 aa).

An N-terminal signal peptide occupies residues 1 to 28; that stretch reads MAHLGYWMLLLFVATWSDVGLCKKRPKP. Residues 23-229 are interaction with GRB2, ERI3 and SYN1; sequence KKRPKPGGGW…ESQAAYQRAA (207 aa). A disordered region spans residues 26-109; the sequence is PKPGGGWNTG…KPSKPKTSMK (84 aa). 5 repeat units span residues 51–59, 60–67, 68–75, 76–83, and 84–92. A 5 X 8 AA tandem repeats of P-H-G-G-G-W-G-Q region spans residues 51–92; that stretch reads PPQGGGWGQPHGGGWGQPHGGGWGQPHGGGWGQPHGGGWGQG. A compositionally biased stretch (gly residues) spans 53 to 93; it reads QGGGWGQPHGGGWGQPHGGGWGQPHGGGWGQPHGGGWGQGG. Residues histidine 61, glycine 62, glycine 63, histidine 69, glycine 70, glycine 71, histidine 77, glycine 78, glycine 79, histidine 85, glycine 86, and glycine 87 each contribute to the Cu(2+) site. Cysteines 178 and 213 form a disulfide. Asparagine 180 and asparagine 196 each carry an N-linked (GlcNAc...) asparagine glycan. Residue alanine 229 is the site of GPI-anchor amidated alanine attachment. A propeptide spans 230–252 (removed in mature form); it reads GVLLFSSPPVILLISFLIFLIVG.

Belongs to the prion family. As to quaternary structure, monomer and homodimer. Has a tendency to aggregate into amyloid fibrils containing a cross-beta spine, formed by a steric zipper of superposed beta-strands. Soluble oligomers may represent an intermediate stage on the path to fibril formation. Copper binding may promote oligomerization. Interacts with GRB2, APP, ERI3/PRNPIP and SYN1. Mislocalized cytosolically exposed PrP interacts with MGRN1; this interaction alters MGRN1 subcellular location and causes lysosomal enlargement. Interacts with KIAA1191.

Its subcellular location is the cell membrane. It is found in the golgi apparatus. Its primary physiological function is unclear. Has cytoprotective activity against internal or environmental stresses. May play a role in neuronal development and synaptic plasticity. May be required for neuronal myelin sheath maintenance. May play a role in iron uptake and iron homeostasis. Soluble oligomers are toxic to cultured neuroblastoma cells and induce apoptosis (in vitro). Association with GPC1 (via its heparan sulfate chains) targets PRNP to lipid rafts. Also provides Cu(2+) or Zn(2+) for the ascorbate-mediated GPC1 deaminase degradation of its heparan sulfate side chains. The protein is Major prion protein (PRNP) of Oryctolagus cuniculus (Rabbit).